The sequence spans 253 residues: 3-deoxy-manno-octulosonate cytidylyltransferase (253 aa).

The protein belongs to the KdsB family.

The protein resides in the cytoplasm. The enzyme catalyses 3-deoxy-alpha-D-manno-oct-2-ulosonate + CTP = CMP-3-deoxy-beta-D-manno-octulosonate + diphosphate. Its pathway is nucleotide-sugar biosynthesis; CMP-3-deoxy-D-manno-octulosonate biosynthesis; CMP-3-deoxy-D-manno-octulosonate from 3-deoxy-D-manno-octulosonate and CTP: step 1/1. The protein operates within bacterial outer membrane biogenesis; lipopolysaccharide biosynthesis. Functionally, activates KDO (a required 8-carbon sugar) for incorporation into bacterial lipopolysaccharide in Gram-negative bacteria. The protein is 3-deoxy-manno-octulosonate cytidylyltransferase of Neisseria meningitidis serogroup C (strain 053442).